Reading from the N-terminus, the 227-residue chain is Lipoprotein-releasing system ATP-binding protein LolD (227 aa).

The 222-residue stretch at 6 to 227 (LTSQKLYKSY…LHEGSLYARE (222 aa)) folds into the ABC transporter domain. 42–49 (GPSGSGKS) lines the ATP pocket.

Belongs to the ABC transporter superfamily. Lipoprotein translocase (TC 3.A.1.125) family. The complex is composed of two ATP-binding proteins (LolD) and two transmembrane proteins (LolC and LolE).

The protein localises to the cell inner membrane. Its function is as follows. Part of the ABC transporter complex LolCDE involved in the translocation of mature outer membrane-directed lipoproteins, from the inner membrane to the periplasmic chaperone, LolA. Responsible for the formation of the LolA-lipoprotein complex in an ATP-dependent manner. This Legionella pneumophila (strain Paris) protein is Lipoprotein-releasing system ATP-binding protein LolD.